Here is a 1284-residue protein sequence, read N- to C-terminus: Collagen alpha-1(XX) chain (1284 aa).

Positions 1–22 (MSSGDPAHLGLCLWLWLGATLG) are cleaved as a signal peptide. One can recognise a Fibronectin type-III 1 domain in the interval 28-119 (ASGLLRLAVL…EFVIEDLKSS (92 aa)). Residues 122–171 (DRSSQRPLGSGAPEPTPSHTGSPDPEQASEPQVAFTPSQDPRTPAGPQFR) form a disordered region. One can recognise a VWFA domain in the interval 179–354 (DMVFLVDGSW…GALAGLLSRL (176 aa)). 5 Fibronectin type-III domains span residues 379-468 (APTS…APLP), 469-559 (PPRA…TLAP), 560-647 (PRHL…TKKA), 649-738 (SPSQ…TPST), and 743-833 (PPSN…ACPA). N-linked (GlcNAc...) asparagine glycosylation is present at N607. In terms of domain architecture, Laminin G-like spans 842-1037 (GFDLMVAFSL…LQMLQIVCSD (196 aa)). Disordered regions lie at residues 1065-1190 (SCSS…EKGE) and 1212-1284 (SFHE…GLWE). The span at 1071–1082 (PGPPGPQGPPGL) shows a compositional bias: pro residues. Collagen-like domains are found at residues 1071–1127 (PGPP…IPGR) and 1133–1190 (PKGM…EKGE). Composition is skewed to low complexity over residues 1112-1125 (LPGL…QGIP) and 1166-1181 (ERGP…LPGP). A compositionally biased stretch (polar residues) spans 1271–1284 (SPGQQGASTQGLWE).

High expression in heart, lung, liver, skeletal muscle, kidney, pancreas, spleen, testis, ovary, subthalamic nucleus and fetal liver. Weak expression in other tissues tested.

Its subcellular location is the secreted. It localises to the extracellular space. In terms of biological role, probable collagen protein. The protein is Collagen alpha-1(XX) chain (COL20A1) of Homo sapiens (Human).